The sequence spans 330 residues: Aspartate--ammonia ligase (330 aa).

It belongs to the class-II aminoacyl-tRNA synthetase family. AsnA subfamily.

The protein resides in the cytoplasm. It catalyses the reaction L-aspartate + NH4(+) + ATP = L-asparagine + AMP + diphosphate + H(+). Its pathway is amino-acid biosynthesis; L-asparagine biosynthesis; L-asparagine from L-aspartate (ammonia route): step 1/1. This chain is Aspartate--ammonia ligase, found in Cronobacter sakazakii (strain ATCC BAA-894) (Enterobacter sakazakii).